Reading from the N-terminus, the 702-residue chain is Polyribonucleotide nucleotidyltransferase (702 aa).

Positions 493 and 499 each coordinate Mg(2+). Positions proline 560–isoleucine 619 constitute a KH domain. An S1 motif domain is found at glycine 629 to lysine 697.

Belongs to the polyribonucleotide nucleotidyltransferase family. In terms of assembly, component of the RNA degradosome, which is a multiprotein complex involved in RNA processing and mRNA degradation. Mg(2+) is required as a cofactor.

The protein localises to the cytoplasm. The enzyme catalyses RNA(n+1) + phosphate = RNA(n) + a ribonucleoside 5'-diphosphate. Involved in mRNA degradation. Catalyzes the phosphorolysis of single-stranded polyribonucleotides processively in the 3'- to 5'-direction. The chain is Polyribonucleotide nucleotidyltransferase from Halorhodospira halophila (strain DSM 244 / SL1) (Ectothiorhodospira halophila (strain DSM 244 / SL1)).